A 175-amino-acid chain; its full sequence is MRSQSLNFVASNTTSDFISNLLESNVINIIILISLLIYLGKRTIVTNLNDRKLNIQCSILEAEKKLSQAQLRLAEAEKKITESEEIISILKHEAKIAANKIKELIVNNAKRKIDKIILDGKTIIANTEIEIMNQIKNRIISTAIDKTKIKLTKNLQAETIERITDNKITFLNNNL.

The helical transmembrane segment at 21–40 threads the bilayer; that stretch reads LLESNVINIIILISLLIYLG.

This sequence belongs to the ATPase B chain family. As to quaternary structure, F-type ATPases have 2 components, F(1) - the catalytic core - and F(0) - the membrane proton channel. F(1) has five subunits: alpha(3), beta(3), gamma(1), delta(1), epsilon(1). F(0) has four main subunits: a(1), b(1), b'(1) and c(10-14). The alpha and beta chains form an alternating ring which encloses part of the gamma chain. F(1) is attached to F(0) by a central stalk formed by the gamma and epsilon chains, while a peripheral stalk is formed by the delta, b and b' chains.

The protein localises to the plastid. It is found in the chloroplast thylakoid membrane. Its function is as follows. F(1)F(0) ATP synthase produces ATP from ADP in the presence of a proton or sodium gradient. F-type ATPases consist of two structural domains, F(1) containing the extramembraneous catalytic core and F(0) containing the membrane proton channel, linked together by a central stalk and a peripheral stalk. During catalysis, ATP synthesis in the catalytic domain of F(1) is coupled via a rotary mechanism of the central stalk subunits to proton translocation. Component of the F(0) channel, it forms part of the peripheral stalk, linking F(1) to F(0). The sequence is that of ATP synthase subunit b, chloroplastic from Cyanidium caldarium (Red alga).